Consider the following 335-residue polypeptide: NmrA-like family domain-containing oxidoreductase lnbB (335 aa).

Residues G14–Q18, R41–S45, D62–G63, T83–S85, K142, and Y166–Q169 each bind NADP(+).

It belongs to the NmrA-type oxidoreductase family.

Its pathway is secondary metabolite biosynthesis. Functionally, nmrA-like family domain-containing oxidoreductase; part of the lnb gene cluster that mediates the biosynthesis of diastereomeric piperazines. Lna and lnb clusters encode sets of enzymes that produce overlapping sets of previously undescribed metabolites such as piperazinomycin-like metabolites or morpholine. The lna and lnb biosynthetic pathways appear to be part of a signaling network that controls the formation of sclerotia, a resilient overwintering structure. One primary function of the non-canonical nonribosomal peptide synthetases lnaA and lnbA consists in the reduction of L-tyrosine. The presence in the clusters of tailoring enzymes such as the oxidoreductases lnaB, lnbB, lnaE or lnbE, as well as of the cytochrome P450 monooxygenases lnaC, lnaD, or lnbC, might explain formation of various diastereomeric piperazines. The polypeptide is NmrA-like family domain-containing oxidoreductase lnbB (Aspergillus flavus (strain ATCC 200026 / FGSC A1120 / IAM 13836 / NRRL 3357 / JCM 12722 / SRRC 167)).